The following is a 154-amino-acid chain: 20 kDa calcium-binding protein (154 aa).

EF-hand domains are found at residues 13-48 (DQVK…LNLT), 49-84 (VKPD…KLQE), 86-121 (QDER…LGDD), and 122-154 (LTEE…MTSE). Residues Asp62, Asp64, Thr66, Asp99, Asn101, Glu105, Asp110, Asp135, Asp137, Ser139, and Glu146 each contribute to the Ca(2+) site.

It is found in the tegument membrane. Its function is as follows. Calcium-binding protein. The polypeptide is 20 kDa calcium-binding protein (SM20) (Schistosoma mansoni (Blood fluke)).